Consider the following 346-residue polypeptide: MSFRTIEWRDDAVIMIDQTRLPMEEVYQRYTDFNAVAEAIRGMVVRGAPAIGVAAAMGVALGAREIIADTQESFFRQLENVCDVMARTRPTAVNLFWAIERMKQKALSLKGNPLETIRTGLKEEAIRIEAEDLAICKNIGRHGADLIPEGATILTHCNAGGLATAGYGTALGVIRAAHEAGKRIQVFSDETRPWLQGARLTTWELMKDSIPVTLISDNMAGFFMSRGEITCCVVGADRIAANGDTANKIGTFSVAVLAREHGIPFYVAAPVSTLDLSLADGSRIPIEERPSTEVTHIRGLPIAPEGVKVRNPSFDVTPAKYITAIITEYGVARGNYTQELAALAAV.

Residues 46-48, Arg89, and Gln196 contribute to the substrate site; that span reads RGA. Asp237 functions as the Proton donor in the catalytic mechanism. Substrate is bound at residue 247 to 248; the sequence is NK.

The protein belongs to the eIF-2B alpha/beta/delta subunits family. MtnA subfamily.

The catalysed reaction is 5-(methylsulfanyl)-alpha-D-ribose 1-phosphate = 5-(methylsulfanyl)-D-ribulose 1-phosphate. Its pathway is amino-acid biosynthesis; L-methionine biosynthesis via salvage pathway; L-methionine from S-methyl-5-thio-alpha-D-ribose 1-phosphate: step 1/6. Functionally, catalyzes the interconversion of methylthioribose-1-phosphate (MTR-1-P) into methylthioribulose-1-phosphate (MTRu-1-P). This is Methylthioribose-1-phosphate isomerase from Trichlorobacter lovleyi (strain ATCC BAA-1151 / DSM 17278 / SZ) (Geobacter lovleyi).